Consider the following 149-residue polypeptide: Lipoprotein MlpF (149 aa).

The N-terminal stretch at 1-17 is a signal peptide; it reads MKIINILFCLFLLLLNS. The N-palmitoyl cysteine moiety is linked to residue C18. Residue C18 is the site of S-diacylglycerol cysteine attachment. A disordered region spans residues 26-58; sequence LKNNAQQTKSRGKRDLTQKEATPEKPKSKEELL. Residues 38 to 58 are compositionally biased toward basic and acidic residues; the sequence is KRDLTQKEATPEKPKSKEELL.

This sequence belongs to the Multicopy lipoprotein (Mlp) family.

It is found in the cell outer membrane. Its function is as follows. An outer membrane protein that may participate in pathogenesis. Some human Lyme disease patients have antibodies against this protein. The Mlp proteins probably undergo intragenic recombination, generating new alleles. In Borreliella burgdorferi (strain ATCC 35210 / DSM 4680 / CIP 102532 / B31) (Borrelia burgdorferi), this protein is Lipoprotein MlpF.